Consider the following 631-residue polypeptide: MSLHVLNDENVPNEKSSQCRDFQFLPPELTGRSSVLCLSQKENVPPQSQAKATNVTFQTPPRDPQTHRILSPNMTNKREAPFGLQNDHCVFLQKENQRPLAPVDDAPVVQMAAEILRAEGELQEGILTSSSLSASTSLLDSELVTPPIEPVLEPSHQGLEPVLESELVTPPVEPVLEPSHQELEPVLESELVTPPIEPVLEPSHQGLEPVLDSELVTPPIEPVLEPSHQGLEPVLESELVTPPIEPVLEPSHQGLEPVLDSELVTPPIEPVLEPSHQGLEPVLDSELVTPPIEPLLEPSHQGLEPVVDLKEESFRDPSEVLGTGAEVDYLEQFGTSSFKESAWRKQSLYVKFDPLLKDSPLRPMPVAPITNSTQDTEEESGSGKPTEAELVNLDFLGDLDVPVSAPTPVWSLEPRGLLPAEPIVDVLKYSQKDLDAVVNVMQQENLELKSKYEDLNTKYLEMGKSVDEFEKIAYKSLEEAEKQRELKEIAEDKIQKVLKERDQLNADLNSMEKSFSDLFKRFEKRKEVIEGYQKNEESLKKYVGECIVKIEKEGQRYQALKIHAEEKLRLANEEIAQVHSKAQAEVLALQASLRKAQMQNHSLEMTLEQKTKEIDELTRICDDLISKMEKI.

Ser2 carries the post-translational modification N-acetylserine. Residue Ser39 is modified to Phosphoserine. A compositionally biased stretch (polar residues) spans 42 to 59 (ENVPPQSQAKATNVTFQT). A disordered region spans residues 42-70 (ENVPPQSQAKATNVTFQTPPRDPQTHRIL). Position 71 is a phosphoserine (Ser71). Necessary but not sufficient for spindle localization stretches follow at residues 311 to 366 (EESF…PMPV) and 384 to 631 (KPTE…MEKI). Ser347 is modified (phosphoserine; by AURKA). The disordered stretch occupies residues 363–385 (PMPVAPITNSTQDTEEESGSGKP). The stretch at 431-630 (QKDLDAVVNV…CDDLISKMEK (200 aa)) forms a coiled coil.

The protein belongs to the TACC family. In terms of assembly, interacts with GCN5L2 and PCAF. The coiled coil C-terminal region interacts with AH receptor nuclear translocator protein (ARNT) and ARNT2. Interacts with CCDC100/CEP120. Interacts with CKAP5 independently of clathrin. Interacts with CKAP5 and clathrin forming the TACC3/ch-TOG/clathrin complex located at spindle inter-microtubules bridges; TACC3 (phosphorylated at Ser-347 by AURKA) and CLTC are proposed to form a composite microtubule interaction surface. Embryonically expressed.

It is found in the cytoplasm. It localises to the cytoskeleton. The protein resides in the microtubule organizing center. Its subcellular location is the centrosome. The protein localises to the spindle pole. In terms of biological role, plays a role in the microtubule-dependent coupling of the nucleus and the centrosome. Involved in the processes that regulate centrosome-mediated interkinetic nuclear migration (INM) of neural progenitors. Acts as a component of the TACC3/ch-TOG/clathrin complex proposed to contribute to stabilization of kinetochore fibers of the mitotic spindle by acting as inter-microtubule bridge. The TACC3/ch-TOG/clathrin complex is required for the maintenance of kinetochore fiber tension. May be involved in the control of cell growth and differentiation. May have a role in embryonic development. This Mus musculus (Mouse) protein is Transforming acidic coiled-coil-containing protein 3 (Tacc3).